The sequence spans 334 residues: Fructose-1,6-bisphosphatase class 1 (334 aa).

Mg(2+) contacts are provided by E90, D113, L115, and D116. Residues 116–119 (DGSS), N209, Y242, and K272 each bind substrate. E278 is a binding site for Mg(2+).

The protein belongs to the FBPase class 1 family. As to quaternary structure, homotetramer. Mg(2+) serves as cofactor.

It localises to the cytoplasm. The catalysed reaction is beta-D-fructose 1,6-bisphosphate + H2O = beta-D-fructose 6-phosphate + phosphate. It participates in carbohydrate biosynthesis; gluconeogenesis. The chain is Fructose-1,6-bisphosphatase class 1 from Actinobacillus pleuropneumoniae serotype 7 (strain AP76).